Here is a 142-residue protein sequence, read N- to C-terminus: MVLSATDKSNVKAAWGKVGGNAPAYGAEALERMFLSFPTTKTYFPHFDLSHGSAQVKAHGEKVANALTKAVGHLDDLPGTLSDLSDLHAHKLRVDPVNFKLLSHTLLVTLAAHLPSDFTPAVHASLDKFLANVSTVLTSKYR.

The region spanning Val2 to Arg142 is the Globin domain. Ser4 bears the Phosphoserine mark. Residues Lys8 and Lys12 each carry the N6-succinyllysine modification. Lys17 is subject to N6-acetyllysine; alternate. An N6-succinyllysine; alternate modification is found at Lys17. Tyr25 carries the post-translational modification Phosphotyrosine. A Phosphoserine modification is found at Ser36. The residue at position 41 (Lys41) is an N6-succinyllysine. Residue Ser50 is modified to Phosphoserine. Position 59 (His59) interacts with O2. His88 is a binding site for heme b. Residue Ser103 is modified to Phosphoserine. Residue Thr109 is modified to Phosphothreonine. Ser125 carries the phosphoserine modification. Thr135 and Thr138 each carry phosphothreonine. A Phosphoserine modification is found at Ser139.

Belongs to the globin family. In terms of assembly, heterotetramer of two alpha chains and two beta chains. As to expression, red blood cells.

Its function is as follows. Involved in oxygen transport from the lung to the various peripheral tissues. In terms of biological role, hemopressin acts as an antagonist peptide of the cannabinoid receptor CNR1. Hemopressin-binding efficiently blocks cannabinoid receptor CNR1 and subsequent signaling. The chain is Hemoglobin subunit alpha (HBA) from Alces alces alces (European moose).